The primary structure comprises 488 residues: pH-response regulator protein palC (488 aa).

The 429-residue stretch at 2–430 (PPYLYRLPTT…TVAFQPVPPV (429 aa)) folds into the BRO1 domain. The segment at 449–488 (PPPSKFSPSRIGHLNEEQGNDSPELGETEDTSYAGKGNYF) is disordered.

The protein belongs to the palC family.

Functionally, required for the proteolytic cleavage of the transcription factor RIM101 in response to alkaline ambient pH. The chain is pH-response regulator protein palC from Cryptococcus neoformans var. neoformans serotype D (strain B-3501A) (Filobasidiella neoformans).